Reading from the N-terminus, the 129-residue chain is Protein Turandot C (129 aa).

Residues Met-1–Gly-21 form the signal peptide.

It belongs to the Turandot family.

It is found in the secreted. Its function is as follows. A humoral factor that may play a role in stress tolerance. The chain is Protein Turandot C from Drosophila melanogaster (Fruit fly).